Consider the following 158-residue polypeptide: UPF0329 protein ECU06_0050 (158 aa).

This sequence belongs to the UPF0329 family.

The polypeptide is UPF0329 protein ECU06_0050 (Encephalitozoon cuniculi (strain GB-M1) (Microsporidian parasite)).